A 469-amino-acid polypeptide reads, in one-letter code: Putative diacyglycerol O-acyltransferase MT0231 (469 aa).

Catalysis depends on histidine 139, which acts as the Proton acceptor.

This sequence belongs to the long-chain O-acyltransferase family.

The enzyme catalyses an acyl-CoA + a 1,2-diacyl-sn-glycerol = a triacyl-sn-glycerol + CoA. Its pathway is glycerolipid metabolism; triacylglycerol biosynthesis. This chain is Putative diacyglycerol O-acyltransferase MT0231, found in Mycobacterium tuberculosis (strain CDC 1551 / Oshkosh).